A 553-amino-acid chain; its full sequence is Cytochrome P450 monooxygenase alnD (553 aa).

The chain crosses the membrane as a helical span at residues 351–371; it reads LVGAGFVTSSAFLSWLIYSLV. Position 493 (Cys493) interacts with heme. Asn518 carries N-linked (GlcNAc...) asparagine glycosylation.

It belongs to the cytochrome P450 family. Requires heme as cofactor.

It localises to the membrane. It participates in polyketide biosynthesis. In terms of biological role, cytochrome P450 monooxygenase; part of the gene cluster that mediates the biosynthesis of asperlin, a polyketide showing anti-inflammatory, antitumor and antibiotic activities. The first step of the asperlin biosynthesis is the production of the intermediate 2,4,6-octatrienoic acid by the highly redusing polyketide synthase alnA with cleavage of the PKS product by the esterase alnB. 2,4,6-octatrienoic acid is further converted to asperlin via several steps involving the remaining enzymes from the cluster. This is Cytochrome P450 monooxygenase alnD from Emericella nidulans (strain FGSC A4 / ATCC 38163 / CBS 112.46 / NRRL 194 / M139) (Aspergillus nidulans).